The primary structure comprises 669 residues: Epithelial sodium channel subunit gamma (669 aa).

Over 1-67 (MAPPYHGDTR…VVSRGRLRKF (67 aa)) the chain is Cytoplasmic. Residues 68 to 88 (IWILLTLSAVGLILWQCAELI) form a helical membrane-spanning segment. Residues 89 to 551 (MSYYTASVSV…VILLSNFGGQ (463 aa)) are Extracellular-facing. Cystine bridges form between cysteine 113–cysteine 300, cysteine 223–cysteine 231, cysteine 277–cysteine 284, cysteine 389–cysteine 474, cysteine 411–cysteine 470, cysteine 415–cysteine 466, cysteine 424–cysteine 451, and cysteine 426–cysteine 440. The helical transmembrane segment at 552 to 572 (LGLWMSCSMVCVIEIIEVFFI) threads the bilayer. Residues 573–669 (DSFSIVMRRR…LPDTLEGRSH (97 aa)) lie on the Cytoplasmic side of the membrane. The segment at 592-619 (DRKAPRPQEPPQVNAPAKEGHDNPVCTD) is disordered.

Belongs to the amiloride-sensitive sodium channel (TC 1.A.6) family. SCNN1G subfamily. Component of the heterotrimeric epithelial sodium channel (ENaC) composed of an alpha/SCNN1A, a beta/SCNN1B and a gamma/SCNN1G subunit.

Its subcellular location is the apical cell membrane. The catalysed reaction is Na(+)(in) = Na(+)(out). Its activity is regulated as follows. Originally identified and characterized by its inhibition by the diuretic drug amiloride. This is one of the three pore-forming subunits of the heterotrimeric epithelial sodium channel (ENaC), a critical regulator of sodium balance and fluid homeostasis. ENaC operates in epithelial tissues, where it mediates the electrodiffusion of sodium ions from extracellular fluid through the apical membrane of cells, with water following osmotically. This chain is Epithelial sodium channel subunit gamma, found in Pelodiscus sinensis (Chinese softshell turtle).